A 28-amino-acid chain; its full sequence is Ribosome-inactivating protein pleuturegin (28 aa).

It belongs to the ribosome-inactivating protein family.

It catalyses the reaction Endohydrolysis of the N-glycosidic bond at one specific adenosine on the 28S rRNA.. Its function is as follows. Inhibits protein synthesis in animal cells. Does not possess ribonuclease activity. The chain is Ribosome-inactivating protein pleuturegin from Pleurotus tuber-regium (King tuber oyster mushroom).